A 296-amino-acid polypeptide reads, in one-letter code: Cell division protein DivIB (296 aa).

Over 1–25 (MMEDKIIHTPRFDEQRRMRRKKRQR) the chain is Cytoplasmic. A helical membrane pass occupies residues 26–46 (LQLFIFLSIVAIVSLILIYMF). Residues 47-296 (TSISYVKKIS…KELNQVKKNS (250 aa)) lie on the Extracellular side of the membrane. The 69-residue stretch at 50-118 (SYVKKISVND…NTVSINVEEY (69 aa)) folds into the POTRA domain.

It belongs to the FtsQ/DivIB family. DivIB subfamily.

The protein localises to the cell membrane. Functionally, cell division protein that may be involved in stabilizing or promoting the assembly of the division complex. This chain is Cell division protein DivIB, found in Macrococcus caseolyticus (strain JCSC5402) (Macrococcoides caseolyticum).